The following is a 299-amino-acid chain: 21S rRNA pseudouridine(2819) synthase (299 aa).

D106 is a catalytic residue.

The protein belongs to the pseudouridine synthase RluA family.

The protein localises to the mitochondrion. It catalyses the reaction uridine(2819) in 21S rRNA = pseudouridine(2819) in 21S rRNA. Its function is as follows. Pseudouridylate synthase responsible for the pseudouridine-2819 formation in mitochondrial 21S rRNA. May modulate the efficiency or the fidelity of the mitochondrial translation machinery. The sequence is that of 21S rRNA pseudouridine(2819) synthase (PUS5) from Kluyveromyces lactis (strain ATCC 8585 / CBS 2359 / DSM 70799 / NBRC 1267 / NRRL Y-1140 / WM37) (Yeast).